Here is a 477-residue protein sequence, read N- to C-terminus: UDP-galactose-lipid carrier transferase (477 aa).

6 helical membrane-spanning segments follow: residues 16 to 36, 52 to 72, 93 to 113, 115 to 135, 175 to 195, and 284 to 304; these read SLAL…IVLI, LDLK…WFWV, TILI…WELS, WIWI…RACV, VIAF…GVPV, and FDLV…VILI. Residues 305–477 lie on the Cytoplasmic side of the membrane; the sequence is FMVSRDGGAP…GVVLKRDGAY (173 aa).

It belongs to the bacterial sugar transferase family.

The protein resides in the cell membrane. Its pathway is glycan metabolism; exopolysaccharide biosynthesis. Its function is as follows. Involved in the biosynthesis of amylovoran which functions as a virulence factor. May act as a sugar transferase and may be involved in the export of the repeating unit by flipping the lipid carrier to the periplasmic face of the inner membrane. This chain is UDP-galactose-lipid carrier transferase (amsG), found in Erwinia amylovora (Fire blight bacteria).